We begin with the raw amino-acid sequence, 253 residues long: HTH-type transcriptional regulator YdeO (253 aa).

The 97-residue stretch at 137 to 233 folds into the HTH araC/xylS-type domain; it reads GKVRNIVNMK…GNSPKRVSKE (97 aa). 2 DNA-binding regions (H-T-H motif) span residues 154–175 and 200–223; these read KDICDCLYISESLLKKKLKQEQ and VNKIAEQCGYASTSYFIYAFRKHF.

Functionally, induces the expression of gadE. Could also regulate the expression of other genes involved in acid resistance. The sequence is that of HTH-type transcriptional regulator YdeO (ydeO) from Shigella flexneri.